Reading from the N-terminus, the 317-residue chain is ADP-L-glycero-D-manno-heptose-6-epimerase (317 aa).

NADP(+) contacts are provided by residues 10–11 (FI), 31–32 (DD), K38, K53, 75–79 (QGACS), and N92. The active-site Proton acceptor is Y139. K143 serves as a coordination point for NADP(+). N166 is a substrate binding site. NADP(+) contacts are provided by V167 and K175. K175 functions as the Proton acceptor in the catalytic mechanism. Residues G177, H184, 198–201 (FEGV), R211, and Y275 each bind substrate.

It belongs to the NAD(P)-dependent epimerase/dehydratase family. HldD subfamily. As to quaternary structure, homopentamer. NADP(+) serves as cofactor.

It carries out the reaction ADP-D-glycero-beta-D-manno-heptose = ADP-L-glycero-beta-D-manno-heptose. It participates in nucleotide-sugar biosynthesis; ADP-L-glycero-beta-D-manno-heptose biosynthesis; ADP-L-glycero-beta-D-manno-heptose from D-glycero-beta-D-manno-heptose 7-phosphate: step 4/4. Functionally, catalyzes the interconversion between ADP-D-glycero-beta-D-manno-heptose and ADP-L-glycero-beta-D-manno-heptose via an epimerization at carbon 6 of the heptose. This is ADP-L-glycero-D-manno-heptose-6-epimerase from Shewanella piezotolerans (strain WP3 / JCM 13877).